We begin with the raw amino-acid sequence, 160 residues long: MASNKVVFSVLLLAVVSVLAATATMAEYHHQDQVVYTPAPLCQPGMGYPMYPLPRCRALVKRQCVGRGTAAAAEQVRRDCCRQLAAVDDSWCRCEAISHMLGGIYRELGAPDVGHPMSEVFRGCRRGDLERAAASLPAFCNVDIPNGGGGVCYWLARSGY.

The first 26 residues, 1-26 (MASNKVVFSVLLLAVVSVLAATATMA), serve as a signal peptide directing secretion. Disulfide bonds link C42-C92, C56-C80, C64-C124, C81-C140, and C94-C152.

Belongs to the protease inhibitor I6 (cereal trypsin/alpha-amylase inhibitor) family. In terms of processing, five disulfide bonds are present.

The protein localises to the secreted. Functionally, seed storage protein. This Oryza sativa subsp. japonica (Rice) protein is Seed allergenic protein RA5 (RA5).